A 500-amino-acid polypeptide reads, in one-letter code: Cytochrome P450 CYP736A12 (500 aa).

The chain crosses the membrane as a helical span at residues 4–24 (LAYPLLFVLLGALSWWILPII). Cys-442 is a heme binding site.

This sequence belongs to the cytochrome P450 family. The cofactor is heme.

The protein localises to the membrane. In terms of biological role, probable heme-thiolate monooxygenase. This Panax ginseng (Korean ginseng) protein is Cytochrome P450 CYP736A12.